The sequence spans 239 residues: Interleukin-27 subunit alpha (239 aa).

The signal sequence occupies residues 1–28 (MGQMADDLGWRLSLLLLSLLLARAGVWG). The N-linked (GlcNAc...) asparagine glycan is linked to asparagine 89. The tract at residues 167-186 (EEENEAGRELLPGAPGGPSK) is disordered.

It belongs to the IL-6 superfamily. Heterodimer with EBI3; not disulfide-linked. This heterodimer is known as interleukin IL-27. O-glycosylated.

The protein localises to the secreted. Its function is as follows. Associates with EBI3 to form the IL-27 interleukin, a heterodimeric cytokine which functions in innate immunity. Cytokine with pro- and anti-inflammatory properties, that can regulate T-helper cell development, suppress T-cell proliferation, stimulate cytotoxic T-cell activity, induce isotype switching in B-cells, and that has diverse effects on innate immune cells. Among its target cells are CD4 T-helper cells which can differentiate in type 1 effector cells (TH1), type 2 effector cells (TH2) and IL17 producing helper T-cells (TH17). It drives rapid clonal expansion of naive but not memory CD4 T-cells. It also strongly synergizes with IL-12 to trigger interferon-gamma/IFN-gamma production of naive CD4 T-cells, binds to the cytokine receptor WSX-1/TCCR which appears to be required but not sufficient for IL-27-mediated signal transduction. IL-27 potentiate the early phase of TH1 response and suppress TH2 and TH17 differentiation. It induces the differentiation of TH1 cells via two distinct pathways, p38 MAPK/TBX21- and ICAM1/ITGAL/ERK-dependent pathways. It also induces STAT1, STAT3, STAT4 and STAT5 phosphorylation and activates TBX21/T-Bet via STAT1 with resulting IL12RB2 up-regulation, an event crucial to TH1 cell commitment. It suppresses the expression of GATA3, the inhibitor TH1 cells development. In CD8 T-cells, it activates STATs as well as GZMB. IL-27 reveals to be a potent inhibitor of TH17 cell development and of IL-17 production. Indeed IL27 alone is also able to inhibit the production of IL17 by CD4 and CD8 T-cells. While IL-27 suppressed the development of pro-inflammatory Th17 cells via STAT1, it inhibits the development of anti-inflammatory inducible regulatory T-cells, iTreg, independently of STAT1. IL-27 also has an effect on cytokine production, it suppresses pro-inflammatory cytokine production such as IL2, IL4, IL5 and IL6 and activates suppressors of cytokine signaling such as SOCS1 and SOCS3. Apart from suppression of cytokine production, IL-27 also antagonizes the effects of some cytokines such as IL6 through direct effects on T-cells. Another important role of IL-27 is its antitumor activity as well as its antiangiogenic activity with activation of production of antiangiogenic chemokines such as IP-10/CXCL10 and MIG/CXCL9. In vein endothelial cells, it induces IRF1/interferon regulatory factor 1 and increase the expression of MHC class II transactivator/CIITA with resulting up-regulation of major histocompatibility complex class II. This Sus scrofa (Pig) protein is Interleukin-27 subunit alpha (IL27).